A 241-amino-acid polypeptide reads, in one-letter code: Bidirectional sugar transporter SWEET17 (241 aa).

Residues 1 to 3 (MAE) lie on the Vacuolar side of the membrane. A helical membrane pass occupies residues 4 to 24 (ASFYIGVIGNVISVLVFLSPV). Residues 6–92 (FYIGVIGNVI…SLFLFYAPRH (87 aa)) enclose the MtN3/slv 1 domain. The Cytoplasmic portion of the chain corresponds to 25–41 (ETFWKIVKRRSTEEYKS). A helical membrane pass occupies residues 42–62 (LPYICTLLGSSLWTYYGIVTP). The Vacuolar segment spans residues 63 to 69 (GEYLVST). The helical transmembrane segment at 70–90 (VNGFGALVETIYVSLFLFYAP) threads the bilayer. The Cytoplasmic portion of the chain corresponds to 91 to 94 (RHLK). Residues 95-115 (LKTVDVDAMLNVFFPIAAIVA) traverse the membrane as a helical segment. Residues 116 to 128 (TRSAFEDEKMRSQ) lie on the Vacuolar side of the membrane. The helical transmembrane segment at 129–149 (SIGFISAGLNIIMYGSPLSAM) threads the bilayer. Residues 129 to 212 (SIGFISAGLN…LILYGIYRNA (84 aa)) form the MtN3/slv 2 domain. Topologically, residues 150-161 (KTVVTTKSVKYM) are cytoplasmic. Residues 162 to 182 (PFWLSFFLFLNGAIWAVYALL) form a helical membrane-spanning segment. Over 183-185 (QHD) the chain is Vacuolar. Residues 186-206 (VFLLVPNGVGFVFGTMQLILY) form a helical membrane-spanning segment. Over 207–241 (GIYRNAKPVGLSNGLSEIAQDEEEGLTSRVEPLLS) the chain is Cytoplasmic.

Belongs to the SWEET sugar transporter family. As to quaternary structure, forms homooligomers and heterooligomers with SWEET1, SWEET2, SWEET3, SWEET4, SWEET6, SWEET7, SWEET8, SWEET9, SWEET11, SWEET12, SWEET13, SWEET15 and SWEET16. Expressed in leaves at low levels, mostly in xylem and parenchyma. Highly expressed in the cortex of roots, predominantly in tips and mature regions, especially in tonoplasts. Also accumulates in cotyledons, stems, flowers, and siliques.

It is found in the vacuole membrane. Its function is as follows. Acts as a vacuolar hexose transporter. Regulates fructose (Fru) homeostasis in leaves and roots by exporting/importing Fru through the tonoplast regarding metabolic demand. The chain is Bidirectional sugar transporter SWEET17 from Arabidopsis thaliana (Mouse-ear cress).